Reading from the N-terminus, the 353-residue chain is S-adenosylmethionine:tRNA ribosyltransferase-isomerase (353 aa).

Belongs to the QueA family. In terms of assembly, monomer.

The protein localises to the cytoplasm. It catalyses the reaction 7-aminomethyl-7-carbaguanosine(34) in tRNA + S-adenosyl-L-methionine = epoxyqueuosine(34) in tRNA + adenine + L-methionine + 2 H(+). It functions in the pathway tRNA modification; tRNA-queuosine biosynthesis. Transfers and isomerizes the ribose moiety from AdoMet to the 7-aminomethyl group of 7-deazaguanine (preQ1-tRNA) to give epoxyqueuosine (oQ-tRNA). This is S-adenosylmethionine:tRNA ribosyltransferase-isomerase from Rickettsia bellii (strain OSU 85-389).